The primary structure comprises 255 residues: Putative deoxyribonuclease tatdn3-B (255 aa).

Residues His11, His13, Glu106, His129, His152, and Asp199 each contribute to the Zn(2+) site.

This sequence belongs to the metallo-dependent hydrolases superfamily. TatD-type hydrolase family. Requires Mn(2+) as cofactor. Ca(2+) serves as cofactor. The cofactor is Mg(2+). It depends on Zn(2+) as a cofactor.

It is found in the nucleus. The 3'-exonuclease activity is sensitive to the metal ion present in the active site, whereas the AP endodeoxyribonuclease activity is observed in a variety of divalent metal cofactors. 3'-exoxonuclease activity is suppressed in the presence of Ca(2+), Zn(2+) and Ni(2+). In terms of biological role, exhibits 3'-exonuclease activities and apurinic/apyrimidinic (AP) endonuclease (in vitro). Show preferential AP endonuclease activity on double-stranded DNA substrates and 3'- exonuclease activity on single-stranded DNA. The chain is Putative deoxyribonuclease tatdn3-B (tatdn3-b) from Xenopus laevis (African clawed frog).